The primary structure comprises 395 residues: Bone morphogenetic protein 2 (395 aa).

Positions 1-23 (MVAGTRCLLALLLPQVLLGGAAG) are cleaved as a signal peptide. The propeptide at 24 to 281 (LIPELGRRKF…GHPLHRREKR (258 aa)) is cleaved by PCSK5. Ser-86 carries the post-translational modification Phosphoserine. N-linked (GlcNAc...) asparagine glycans are attached at residues Asn-134 and Asn-199. The disordered stretch occupies residues 270-292 (GKGHPLHRREKRQAKHKQRKRLK). Residues 273–292 (HPLHRREKRQAKHKQRKRLK) are compositionally biased toward basic residues. 3 cysteine pairs are disulfide-bonded: Cys-295-Cys-360, Cys-324-Cys-392, and Cys-328-Cys-394. Residue Asn-337 is glycosylated (N-linked (GlcNAc...) asparagine).

This sequence belongs to the TGF-beta family. Homodimer; disulfide-linked. Interacts with SOSTDC1. Interacts with GREM2, RGMA, RGMB and RGMC. Interacts with ASPN. Interacts with MAFP5. Interacts with FBN1 (via N-terminal domain) and FBN2. Interacts with type I receptor BMPR1A. Interacts with type II receptor BMPR2. Interacts with SCUBE3. Interacts with TNFAIP6 (primarily via Link domain); this interaction is inhibited by hyaluronan. Interacts with ERFE. Interacts with BMPR1A/ALK3; the interaction may induce HAMP expression. Forms heterodimers with BMP6 in vitro; the heterodimer then binds to its receptor BMPR1A /ALK3 and may induce HAMP expression. Interacts with TGFBR3.

The protein resides in the secreted. Functionally, growth factor of the TGF-beta superfamily that plays essential roles in many developmental processes, including cardiogenesis, neurogenesis, and osteogenesis. Induces cartilage and bone formation. Initiates the canonical BMP signaling cascade by associating with type I receptor BMPR1A and type II receptor BMPR2. Once all three components are bound together in a complex at the cell surface, BMPR2 phosphorylates and activates BMPR1A. In turn, BMPR1A propagates signal by phosphorylating SMAD1/5/8 that travel to the nucleus and act as activators and repressors of transcription of target genes. Also acts to promote expression of HAMP, via the interaction with its receptor BMPR1A/ALK3. Can also signal through non-canonical pathways such as ERK/MAP kinase signaling cascade that regulates osteoblast differentiation. Also stimulates the differentiation of myoblasts into osteoblasts via the EIF2AK3-EIF2A-ATF4 pathway by stimulating EIF2A phosphorylation which leads to increased expression of ATF4 which plays a central role in osteoblast differentiation. Acts as a positive regulator of odontoblast differentiation during mesenchymal tooth germ formation, expression is repressed during the bell stage by MSX1-mediated inhibition of CTNNB1 signaling. The chain is Bone morphogenetic protein 2 (BMP2) from Oryctolagus cuniculus (Rabbit).